Reading from the N-terminus, the 63-residue chain is Cecropin-B (63 aa).

An N-terminal signal peptide occupies residues 1–23; the sequence is MNFNKIFVFVALILAISLGNSEA. An Arginine amide modification is found at Arg62.

It belongs to the cecropin family. Strongly expressed in larval, pupal and adult fat body and hemocytes after injection of bacteria. Maximal expression is seen in pupae.

Its subcellular location is the secreted. Its function is as follows. Cecropins have lytic and antibacterial activity against several Gram-positive and Gram-negative bacteria. This is Cecropin-B (CecB) from Drosophila melanogaster (Fruit fly).